The chain runs to 626 residues: Chaperone protein DnaK (626 aa).

Threonine 197 is modified (phosphothreonine; by autocatalysis). 2 stretches are compositionally biased toward basic and acidic residues: residues 512–528 and 539–551; these read DAEA…EAVE and QTEK…GEKI. 2 disordered regions span residues 512-551 and 601-626; these read DAEA…GEKI and DQNA…AEVE.

It belongs to the heat shock protein 70 family.

In terms of biological role, acts as a chaperone. The protein is Chaperone protein DnaK of Campylobacter fetus subsp. fetus (strain 82-40).